A 373-amino-acid polypeptide reads, in one-letter code: Chloroperoxidase (373 aa).

An N-terminal signal peptide occupies residues 1–20; the sequence is MFSKVLPFVGAVAALPHSVR. Position 21 is a pyrrolidone carboxylic acid (Q21). A glycan (N-linked (GlcNAc...) asparagine) is linked at N33. Position 50 (C50) interacts with heme. Residues C100 and C108 are joined by a disulfide bond. An N-linked (GlcNAc...) asparagine glycan is attached at N114. The Mn(2+) site is built by E125, H126, and S129. E204 is an active-site residue. N237 carries an N-linked (GlcNAc...) asparagine glycan. A glycan (O-linked (Man) threonine) is linked at T259. S260, S262, S263, and S269 each carry an O-linked (Man) serine glycan. T271 is a glycosylation site (O-linked (Man) threonine). S272 carries an O-linked (Man) serine glycan. T273 carries O-linked (Man) threonine glycosylation. O-linked (Man...) threonine glycans are attached at residues T296, T304, and T314. Positions 322 to 373 are excised as a propeptide; that stretch reads EAAPAATTSMAVFKNPYLEAIGTQDIKNQQAYVSSKAAAMASAMAANKARNL.

The protein belongs to the chloroperoxidase family. Requires heme b as cofactor. Mn(2+) serves as cofactor. Post-translationally, N- and O-glycosylated.

It catalyses the reaction RH + Cl(-) + H2O2 = RCl + 2 H2O.. Functionally, catalyzes peroxidative halogenations involved in the biosynthesis of clardariomycin (2,2-dichloro-1,3-cyclo-pentenedione). The enzyme also has potent catalase activity and in the absence of halide ion, acts as a peroxidase similar to plant peroxidases. This is Chloroperoxidase (CPO) from Leptoxyphium fumago (Caldariomyces fumago).